The following is a 208-amino-acid chain: PITH domain-containing protein ZK353.9 (208 aa).

One can recognise a PITH domain in the interval 17–189 (EVPGDDVYRY…RIAIATYESR (173 aa)).

Belongs to the PITHD1 family.

This Caenorhabditis elegans protein is PITH domain-containing protein ZK353.9.